Reading from the N-terminus, the 338-residue chain is Tryptophan--tRNA ligase (338 aa).

ATP contacts are provided by residues 11-13 (QPS) and 19-20 (GN). The 'HIGH' region motif lies at 12–20 (PSGELSIGN). Asp-135 is an L-tryptophan binding site. ATP is bound by residues 147-149 (GSD), Val-189, and 198-202 (KMSKS). Residues 198–202 (KMSKS) carry the 'KMSKS' region motif.

Belongs to the class-I aminoacyl-tRNA synthetase family. In terms of assembly, homodimer.

It is found in the cytoplasm. The catalysed reaction is tRNA(Trp) + L-tryptophan + ATP = L-tryptophyl-tRNA(Trp) + AMP + diphosphate + H(+). Its function is as follows. Catalyzes the attachment of tryptophan to tRNA(Trp). This chain is Tryptophan--tRNA ligase, found in Vibrio parahaemolyticus serotype O3:K6 (strain RIMD 2210633).